A 239-amino-acid chain; its full sequence is Pyridoxine 5'-phosphate synthase (239 aa).

Asn-7 lines the 3-amino-2-oxopropyl phosphate pocket. 9–10 (DH) provides a ligand contact to 1-deoxy-D-xylulose 5-phosphate. Arg-18 provides a ligand contact to 3-amino-2-oxopropyl phosphate. His-43 (proton acceptor) is an active-site residue. 1-deoxy-D-xylulose 5-phosphate contacts are provided by Arg-45 and His-50. Glu-70 (proton acceptor) is an active-site residue. A 1-deoxy-D-xylulose 5-phosphate-binding site is contributed by Thr-100. The active-site Proton donor is the His-191. Residues Gly-192 and 213–214 (GH) each bind 3-amino-2-oxopropyl phosphate.

The protein belongs to the PNP synthase family. Homooctamer; tetramer of dimers.

The protein localises to the cytoplasm. The catalysed reaction is 3-amino-2-oxopropyl phosphate + 1-deoxy-D-xylulose 5-phosphate = pyridoxine 5'-phosphate + phosphate + 2 H2O + H(+). It participates in cofactor biosynthesis; pyridoxine 5'-phosphate biosynthesis; pyridoxine 5'-phosphate from D-erythrose 4-phosphate: step 5/5. Functionally, catalyzes the complicated ring closure reaction between the two acyclic compounds 1-deoxy-D-xylulose-5-phosphate (DXP) and 3-amino-2-oxopropyl phosphate (1-amino-acetone-3-phosphate or AAP) to form pyridoxine 5'-phosphate (PNP) and inorganic phosphate. The polypeptide is Pyridoxine 5'-phosphate synthase (Nostoc sp. (strain PCC 7120 / SAG 25.82 / UTEX 2576)).